Reading from the N-terminus, the 521-residue chain is Protein translocase subunit SecD (521 aa).

A run of 6 helical transmembrane segments spans residues 8–28 (LKLASVLGVCLLGLLLCLPNG), 359–379 (AGILSLGVGFLLVVVFMVLFY), 388–408 (IALLANLVLMVAILSLFEATL), 410–430 (LPGMAGMLLTLGMAVDANILI), 459–479 (IVDSNATAFLAHVMLFVFGTG), and 483–503 (GFALTITIGIATTLFTTLLLS).

It belongs to the SecD/SecF family. SecD subfamily. In terms of assembly, forms a complex with SecF. Part of the essential Sec protein translocation apparatus which comprises SecA, SecYEG and auxiliary proteins SecDF-YajC and YidC.

The protein resides in the cell inner membrane. Its function is as follows. Part of the Sec protein translocase complex. Interacts with the SecYEG preprotein conducting channel. SecDF uses the proton motive force (PMF) to complete protein translocation after the ATP-dependent function of SecA. This Acetobacter pasteurianus (strain NBRC 105184 / IFO 3283-01) protein is Protein translocase subunit SecD.